We begin with the raw amino-acid sequence, 431 residues long: 23S rRNA (uracil(1939)-C(5))-methyltransferase RlmD (431 aa).

Residues 10 to 68 (RVTTRQIITVKVNDLDSFGQGVARHNGKALFIPGLLPEESAEVIITEDKKQFARARVSR) form the TRAM domain. 4 residues coordinate [4Fe-4S] cluster: Cys-81, Cys-87, Cys-90, and Cys-161. S-adenosyl-L-methionine contacts are provided by Gln-264, Phe-293, Asn-298, Glu-314, Asn-341, and Asp-362. Cys-388 (nucleophile) is an active-site residue.

Belongs to the class I-like SAM-binding methyltransferase superfamily. RNA M5U methyltransferase family. RlmD subfamily.

It carries out the reaction uridine(1939) in 23S rRNA + S-adenosyl-L-methionine = 5-methyluridine(1939) in 23S rRNA + S-adenosyl-L-homocysteine + H(+). In terms of biological role, catalyzes the formation of 5-methyl-uridine at position 1939 (m5U1939) in 23S rRNA. This Salmonella typhimurium (strain LT2 / SGSC1412 / ATCC 700720) protein is 23S rRNA (uracil(1939)-C(5))-methyltransferase RlmD.